Reading from the N-terminus, the 289-residue chain is 3-methyl-2-oxobutanoate hydroxymethyltransferase (289 aa).

Positions 1 to 10 (MSDSKSSAST) are enriched in low complexity. The segment at 1–33 (MSDSKSSASTSEDRLYGSAPSHDVPKRKTRTHH) is disordered. Mg(2+) contacts are provided by Asp70 and Asp109. 3-methyl-2-oxobutanoate-binding positions include 70–71 (DS), Asp109, and Lys139. Glu141 contributes to the Mg(2+) binding site. Catalysis depends on Glu207, which acts as the Proton acceptor.

It belongs to the PanB family. Homodecamer; pentamer of dimers. The cofactor is Mg(2+).

The protein resides in the cytoplasm. The enzyme catalyses 3-methyl-2-oxobutanoate + (6R)-5,10-methylene-5,6,7,8-tetrahydrofolate + H2O = 2-dehydropantoate + (6S)-5,6,7,8-tetrahydrofolate. The protein operates within cofactor biosynthesis; (R)-pantothenate biosynthesis; (R)-pantoate from 3-methyl-2-oxobutanoate: step 1/2. Its function is as follows. Catalyzes the reversible reaction in which hydroxymethyl group from 5,10-methylenetetrahydrofolate is transferred onto alpha-ketoisovalerate to form ketopantoate. This is 3-methyl-2-oxobutanoate hydroxymethyltransferase from Rhodococcus jostii (strain RHA1).